A 378-amino-acid chain; its full sequence is Putative F-box protein At3g24580 (378 aa).

Residues 1 to 47 (MTKMSNLPNDLAEEVLSRVSLTSLRNVRLTCKDWNTLSKGESFAKNH) enclose the F-box domain.

In Arabidopsis thaliana (Mouse-ear cress), this protein is Putative F-box protein At3g24580.